The primary structure comprises 213 residues: Gas vesicle protein F1 (213 aa).

Belongs to the gas vesicle GvpF/GvpL family. Binds GvpA1 in early growth stages; is the only one of GvpF1 to GvpM1 that interacts with GvpA1 in H.volcanii experiments. GvpF to GvpM interact with each other in vitro, and may form multi-subunit complex(es). Interacts with GvpC1 and GvpO1.

It localises to the gas vesicle. Its subcellular location is the cytoplasm. Might be involved in preventing aggregation of GvpA1. Proteins GvpF to GvpM might be involved in nucleating gas vesicle formation. A minor component of the gas vesicle, also found in soluble extracts. Gas vesicles are hollow, gas filled proteinaceous nanostructures found in several microbial planktonic microorganisms. They allow positioning of halobacteria at the optimal depth for growth in the poorly aerated, shallow brine pools of their habitat. Its function is as follows. Expression of a 9.5 kb p-vac DNA fragment containing 2 divergently transcribed regions (gvpD-gvpE-gvpF-gvpG-gvpH-gvpI-gvpJ-gvpK-gvpL-gvpM and gvpA-gvpC-gvpN-gvpO) allows H.volcanii to produce gas vesicles. A minimal gas vesicle can be made in H.volcanii by gvpA1-gvpO1 plus gvpF1-gvpG1-gvpJ1-gvpK1-gvpL1-gvpM1; lack of enough GvpJ1 prevents formation. The same region restores gas vesicle production in H.halobium without the p-vac locus. In Halobacterium salinarum (strain ATCC 700922 / JCM 11081 / NRC-1) (Halobacterium halobium), this protein is Gas vesicle protein F1 (gvpF11).